Consider the following 393-residue polypeptide: Squamosa promoter-binding-like protein 11 (393 aa).

Positions 74 to 96 (QSTSINSSSPEAKRCKLASESSP) are disordered. The SBP-type zinc-finger motif lies at 172–249 (VPRCQIDGCE…SHHNARRRKP (78 aa)). 8 residues coordinate Zn(2+): C175, C180, C197, H200, C216, C219, H223, and C235. Positions 232-248 (KRSCRKRLSHHNARRRK) match the Bipartite nuclear localization signal motif.

It depends on Zn(2+) as a cofactor.

Its subcellular location is the nucleus. Trans-acting factor that binds specifically to the consensus nucleotide sequence 5'-TNCGTACAA-3'. This Arabidopsis thaliana (Mouse-ear cress) protein is Squamosa promoter-binding-like protein 11 (SPL11).